Reading from the N-terminus, the 128-residue chain is Calcitonin gene-related peptide 1 (128 aa).

The signal sequence occupies residues 1 to 25 (MGFLKFSPFLVVSILLLYQACSLQA). The propeptide occupies 26 to 80 (VPLRSILESSPGMATLSEEEVRLLAALVQDYMQMKARELEQEEEQEAEGSSVTAQ). An intrachain disulfide couples Cys84 to Cys89. Phe119 is subject to Phenylalanine amide. A propeptide spanning residues 125–128 (DLQA) is cleaved from the precursor.

It belongs to the calcitonin family. As to expression, detected in nerve cells of cerebrum, hippocampus and pons/midbrain in newborns, and only in nerve cells of pons/midbrain in adult.

The protein localises to the secreted. Its function is as follows. CGRP1/CALCA is a peptide hormone that induces vasodilation mediated by the CALCRL-RAMP1 receptor complex. Dilates a variety of vessels including the coronary, cerebral and systemic vasculature. Its abundance in the CNS also points toward a neurotransmitter or neuromodulator role. It also elevates platelet cAMP. CGRP1 can also bind and activate CALCR-RAMP1 (AMYR1) receptor complex. This is Calcitonin gene-related peptide 1 from Mus musculus (Mouse).